The following is a 334-amino-acid chain: Phenylalanine--tRNA ligase alpha subunit (334 aa).

E249 is a binding site for Mg(2+).

It belongs to the class-II aminoacyl-tRNA synthetase family. Phe-tRNA synthetase alpha subunit type 1 subfamily. Tetramer of two alpha and two beta subunits. The cofactor is Mg(2+).

It localises to the cytoplasm. The catalysed reaction is tRNA(Phe) + L-phenylalanine + ATP = L-phenylalanyl-tRNA(Phe) + AMP + diphosphate + H(+). In Desulfosudis oleivorans (strain DSM 6200 / JCM 39069 / Hxd3) (Desulfococcus oleovorans), this protein is Phenylalanine--tRNA ligase alpha subunit.